The sequence spans 132 residues: Small ribosomal subunit protein uS8 (132 aa).

This sequence belongs to the universal ribosomal protein uS8 family. Part of the 30S ribosomal subunit. Contacts proteins S5 and S12.

In terms of biological role, one of the primary rRNA binding proteins, it binds directly to 16S rRNA central domain where it helps coordinate assembly of the platform of the 30S subunit. This is Small ribosomal subunit protein uS8 from Granulibacter bethesdensis (strain ATCC BAA-1260 / CGDNIH1).